The following is a 137-amino-acid chain: Basic phospholipase A2 homolog Pgo-K49 (137 aa).

The N-terminal stretch at 1-16 (MRTLLIVAVLLVGVEG) is a signal peptide. 7 cysteine pairs are disulfide-bonded: Cys42–Cys131, Cys44–Cys60, Cys59–Cys111, Cys65–Cys137, Cys66–Cys104, Cys73–Cys97, and Cys91–Cys102. The tract at residues 121–133 (KKYKIHMKFFCKK) is important for membrane-damaging activities in eukaryotes and bacteria; heparin-binding.

Expressed by the venom gland.

The protein resides in the secreted. Snake venom phospholipase A2 homolog that lacks enzymatic activity. Is myotoxic. A model of myotoxic mechanism has been proposed: an apo Lys49-PLA2 is activated by the entrance of a hydrophobic molecule (e.g. fatty acid) at the hydrophobic channel of the protein leading to a reorientation of a monomer. This reorientation causes a transition between 'inactive' to 'active' states, causing alignment of C-terminal and membrane-docking sites (MDoS) side-by-side and putting the membrane-disruption sites (MDiS) in the same plane, exposed to solvent and in a symmetric position for both monomers. The MDoS region stabilizes the toxin on membrane by the interaction of charged residues with phospholipid head groups. Subsequently, the MDiS region destabilizes the membrane with penetration of hydrophobic residues. This insertion causes a disorganization of the membrane, allowing an uncontrolled influx of ions (i.e. calcium and sodium), and eventually triggering irreversible intracellular alterations and cell death. In Cerrophidion godmani (Porthidium godmani), this protein is Basic phospholipase A2 homolog Pgo-K49.